We begin with the raw amino-acid sequence, 327 residues long: Peroxidase N (327 aa).

A signal peptide spans 1 to 28 (MKTQTKVMGGHVLLTVFTLCMLCSAVRA). A Pyrrolidone carboxylic acid modification is found at Gln-29. Intrachain disulfides connect Cys-39-Cys-116, Cys-72-Cys-77, Cys-122-Cys-323, and Cys-200-Cys-232. Residue His-70 is the Proton acceptor of the active site. Positions 71, 74, 76, 78, and 80 each coordinate Ca(2+). Asn-155 carries an N-linked (GlcNAc...) asparagine glycan. A substrate-binding site is contributed by Pro-163. A glycan (N-linked (GlcNAc...) asparagine) is linked at Asn-182. His-193 contributes to the heme b binding site. Thr-194 contributes to the Ca(2+) binding site. N-linked (GlcNAc...) asparagine glycosylation is found at Asn-209 and Asn-239. Asp-245 is a Ca(2+) binding site. N-linked (GlcNAc...) asparagine glycosylation occurs at Asn-247. Residues Ser-248 and Asp-253 each contribute to the Ca(2+) site. The N-linked (GlcNAc...) asparagine glycan is linked to Asn-281.

This sequence belongs to the peroxidase family. Classical plant (class III) peroxidase subfamily. Ca(2+) is required as a cofactor. It depends on heme b as a cofactor.

The protein resides in the secreted. It carries out the reaction 2 a phenolic donor + H2O2 = 2 a phenolic radical donor + 2 H2O. Removal of H(2)O(2), oxidation of toxic reductants, biosynthesis and degradation of lignin, suberization, auxin catabolism, response to environmental stresses such as wounding, pathogen attack and oxidative stress. These functions might be dependent on each isozyme/isoform in each plant tissue. This chain is Peroxidase N (HRPN), found in Armoracia rusticana (Horseradish).